Here is a 118-residue protein sequence, read N- to C-terminus: MRRAGLGEGVPPGNYGNYGYANSGYSACEEENERLTESLRSKVTAIKSLSIEIGHEVKTQNKLLAEMDSQFDSTTGFLGKTMGKLKILSRGSQTKLLCYMMLFSLFVFFIIYWIIKLR.

The Cytoplasmic segment spans residues 1–94 (MRRAGLGEGV…LKILSRGSQT (94 aa)). The 63-residue stretch at 26–88 (SACEEENERL…GKTMGKLKIL (63 aa)) folds into the t-SNARE coiled-coil homology domain. S50 is modified (phosphoserine). The helical; Anchor for type IV membrane protein transmembrane segment at 95–115 (KLLCYMMLFSLFVFFIIYWII) threads the bilayer. Topologically, residues 116–118 (KLR) are vesicular.

Belongs to the BET1 family. Interacts with SNARE complex members GOSR2, SEC22B and STX5. Interacts with LMAN1/ERGIC53. Interacts with STX17. In terms of tissue distribution, expressed in muscle.

The protein resides in the endoplasmic reticulum membrane. It is found in the golgi apparatus. Its subcellular location is the cis-Golgi network membrane. The protein localises to the golgi apparatus membrane. Functionally, required for vesicular transport from the ER to the Golgi complex. Functions as a SNARE involved in the docking process of ER-derived vesicles with the cis-Golgi membrane. The chain is BET1 homolog (BET1) from Homo sapiens (Human).